A 120-amino-acid polypeptide reads, in one-letter code: Protein TCL1B4 (120 aa).

It belongs to the TCL1 family.

The protein is Protein TCL1B4 (Tcl1b4) of Mus musculus (Mouse).